Here is a 417-residue protein sequence, read N- to C-terminus: NADH-quinone oxidoreductase subunit D (417 aa).

It belongs to the complex I 49 kDa subunit family. NDH-1 is composed of 14 different subunits. Subunits NuoB, C, D, E, F, and G constitute the peripheral sector of the complex.

It localises to the cell inner membrane. The enzyme catalyses a quinone + NADH + 5 H(+)(in) = a quinol + NAD(+) + 4 H(+)(out). Its function is as follows. NDH-1 shuttles electrons from NADH, via FMN and iron-sulfur (Fe-S) centers, to quinones in the respiratory chain. The immediate electron acceptor for the enzyme in this species is believed to be ubiquinone. Couples the redox reaction to proton translocation (for every two electrons transferred, four hydrogen ions are translocated across the cytoplasmic membrane), and thus conserves the redox energy in a proton gradient. In Nitrosomonas eutropha (strain DSM 101675 / C91 / Nm57), this protein is NADH-quinone oxidoreductase subunit D.